The primary structure comprises 31 residues: Photosystem II reaction center protein T (31 aa).

The helical transmembrane segment at 3 to 23 threads the bilayer; it reads AFSYVLILTLALVTLFFAVAF.

It belongs to the PsbT family. PSII is composed of 1 copy each of membrane proteins PsbA, PsbB, PsbC, PsbD, PsbE, PsbF, PsbH, PsbI, PsbJ, PsbK, PsbL, PsbM, PsbT, PsbX, PsbY, Psb30/Ycf12, peripheral proteins PsbO, CyanoQ (PsbQ), PsbU, PsbV and a large number of cofactors. It forms dimeric complexes.

The protein localises to the cellular thylakoid membrane. Found at the monomer-monomer interface of the photosystem II (PS II) dimer, plays a role in assembly and dimerization of PSII. PSII is a light-driven water plastoquinone oxidoreductase, using light energy to abstract electrons from H(2)O, generating a proton gradient subsequently used for ATP formation. This Prochlorococcus marinus (strain NATL2A) protein is Photosystem II reaction center protein T.